The following is a 234-amino-acid chain: 1-(5-phosphoribosyl)-5-[(5-phosphoribosylamino)methylideneamino] imidazole-4-carboxamide isomerase (234 aa).

The active-site Proton acceptor is D8. Residue D128 is the Proton donor of the active site.

The protein belongs to the HisA/HisF family.

It is found in the cytoplasm. It carries out the reaction 1-(5-phospho-beta-D-ribosyl)-5-[(5-phospho-beta-D-ribosylamino)methylideneamino]imidazole-4-carboxamide = 5-[(5-phospho-1-deoxy-D-ribulos-1-ylimino)methylamino]-1-(5-phospho-beta-D-ribosyl)imidazole-4-carboxamide. Its pathway is amino-acid biosynthesis; L-histidine biosynthesis; L-histidine from 5-phospho-alpha-D-ribose 1-diphosphate: step 4/9. This chain is 1-(5-phosphoribosyl)-5-[(5-phosphoribosylamino)methylideneamino] imidazole-4-carboxamide isomerase, found in Cenarchaeum symbiosum (strain A).